A 235-amino-acid polypeptide reads, in one-letter code: Acyl-protein thioesterase 1 (235 aa).

Active-site charge relay system residues include Ser-125, Asp-181, and His-213.

This sequence belongs to the AB hydrolase superfamily. AB hydrolase 2 family.

It is found in the cytoplasm. It localises to the nucleus. The enzyme catalyses S-hexadecanoyl-L-cysteinyl-[protein] + H2O = L-cysteinyl-[protein] + hexadecanoate + H(+). Functionally, hydrolyzes fatty acids from S-acylated cysteine residues in proteins with a strong preference for palmitoylated G-alpha proteins over other acyl substrates. Mediates the deacylation of G-alpha proteins such as GPA1 in vivo, but has weak or no activity toward palmitoylated Ras proteins. Has weak lysophospholipase activity in vitro; however such activity may not exist in vivo. The polypeptide is Acyl-protein thioesterase 1 (Gibberella zeae (strain ATCC MYA-4620 / CBS 123657 / FGSC 9075 / NRRL 31084 / PH-1) (Wheat head blight fungus)).